Reading from the N-terminus, the 60-residue chain is Mating pheromone En-2 (60 aa).

4 cysteine pairs are disulfide-bonded: C11–C39, C24–C35, C31–C57, and C36–C48.

It localises to the secreted. In terms of biological role, mating ciliate pheromones (or gamones) are diffusible extracellular communication signals that distinguish different intraspecific classes of cells commonly referred to as 'mating types'. They prepare the latter for conjugation by changing their cell surface properties. The protein is Mating pheromone En-2 of Euplotes nobilii (Ciliate).